The chain runs to 105 residues: Integration host factor subunit alpha (105 aa).

Belongs to the bacterial histone-like protein family. Heterodimer of an alpha and a beta chain.

Its function is as follows. This protein is one of the two subunits of integration host factor, a specific DNA-binding protein that functions in genetic recombination as well as in transcriptional and translational control. This Azorhizobium caulinodans (strain ATCC 43989 / DSM 5975 / JCM 20966 / LMG 6465 / NBRC 14845 / NCIMB 13405 / ORS 571) protein is Integration host factor subunit alpha.